Consider the following 250-residue polypeptide: Peptidyl-tRNA hydrolase, mitochondrial (250 aa).

A mitochondrion-targeting transit peptide spans Met-1 to Ala-45. Tyr-68 serves as a coordination point for tRNA. His-73 functions as the Proton acceptor in the catalytic mechanism. TRNA contacts are provided by Phe-118, Asn-120, and Asn-166.

It belongs to the PTH family.

Its subcellular location is the mitochondrion. The catalysed reaction is an N-acyl-L-alpha-aminoacyl-tRNA + H2O = an N-acyl-L-amino acid + a tRNA + H(+). Functionally, the natural substrate for this enzyme may be peptidyl-tRNAs which drop off the ribosome during protein synthesis. The sequence is that of Peptidyl-tRNA hydrolase, mitochondrial from Oryza sativa subsp. japonica (Rice).